The chain runs to 307 residues: Fructokinase (307 aa).

Belongs to the carbohydrate kinase PfkB family.

It catalyses the reaction D-fructose + ATP = D-fructose 6-phosphate + ADP + H(+). In terms of biological role, involved in sucrose metabolism. The sequence is that of Fructokinase (scrK) from Klebsiella pneumoniae.